Here is a 416-residue protein sequence, read N- to C-terminus: Tyrosine--tRNA ligase (416 aa).

Position 40 (Tyr40) interacts with L-tyrosine. A 'HIGH' region motif is present at residues 45–54; it reads ATAKSLHVGS. The L-tyrosine site is built by Tyr177 and Gln181. The short motif at 237 to 241 is the 'KMSKS' region element; sequence KMGKS. Lys240 provides a ligand contact to ATP. One can recognise an S4 RNA-binding domain in the interval 351–415; that stretch reads ISIVQLIVKS…GKKRHAMVQL (65 aa).

It belongs to the class-I aminoacyl-tRNA synthetase family. TyrS type 1 subfamily. Homodimer.

It localises to the cytoplasm. The enzyme catalyses tRNA(Tyr) + L-tyrosine + ATP = L-tyrosyl-tRNA(Tyr) + AMP + diphosphate + H(+). Catalyzes the attachment of tyrosine to tRNA(Tyr) in a two-step reaction: tyrosine is first activated by ATP to form Tyr-AMP and then transferred to the acceptor end of tRNA(Tyr). This Roseobacter denitrificans (strain ATCC 33942 / OCh 114) (Erythrobacter sp. (strain OCh 114)) protein is Tyrosine--tRNA ligase.